We begin with the raw amino-acid sequence, 886 residues long: 3',5'-cyclic-AMP phosphodiesterase 4A (886 aa).

The tract at residues Met1 to Ser128 is disordered. Position 13 is a phosphoserine (Ser13). Residues Gln36–Arg46 show a composition bias toward low complexity. Residues Ser51–Gly78 are compositionally biased toward basic and acidic residues. Residues Thr93 to Ser104 are compositionally biased toward gly residues. A phosphoserine mark is found at Gly119 and Leu123. Ser152 carries the phosphoserine; by MAPKAPK2 modification. Residues Ser157, Ser165, and Ser209 each carry the phosphoserine modification. A disordered region spans residues Lys294–Pro331. A compositionally biased stretch (pro residues) spans Arg315–His328. Position 346 is a phosphoserine (Ser346). A PDEase domain is found at Val357–Ser686. Lys358 is covalently cross-linked (Glycyl lysine isopeptide (Lys-Gly) (interchain with G-Cter in SUMO)). The active-site Proton donor is the His433. A 3',5'-cyclic AMP-binding site is contributed by His433. AMP is bound by residues His433 and His437. Zn(2+) is bound by residues His437, His473, Asp474, and Asp591. AMP-binding residues include Asp474, Asp591, Gln642, and Phe645. Asp474 is a binding site for Mg(2+). Asp474 serves as a coordination point for Mn(2+). Residues Gln642 and Phe645 each contribute to the 3',5'-cyclic AMP site. Disordered stretches follow at residues Ala682–Asp705 and Phe866–Thr886. Phosphoserine is present on residues Ser686 and Ser688. Gly residues predominate over residues Pro876–Thr886.

It belongs to the cyclic nucleotide phosphodiesterase family. PDE4 subfamily. As to quaternary structure, interacts with LYN (via SH3 domain). Interacts with ARRB2. Requires Zn(2+) as cofactor. The cofactor is Mg(2+). Mn(2+) is required as a cofactor. In terms of processing, proteolytically cleaved by CASP3. Phosphorylated at Ser-119 by PKA. In terms of tissue distribution, expressed in lymphoid cell subsets including CD8-positive T cells and T-helper 2 cells. Expressed in dendritic cells. Highly expressed in liver, stomach, testis, thyroid and adrenal glands and at a lower extent in placenta, kidney, pancreas, ovary, uterus and skin. Expressed in myeloid cell subsets including dendritic cells, monocytes, macrophages, eosinophils and mast cells. Expressed in natural killer cells. Expressed in bronchial smooth muscle. As to expression, expressed at high levels in the heart and small intestine. It is also found in the brain, kidney, spleen, colon, salivary gland, ovary and peripheral blood lymphocytes. In terms of tissue distribution, expressed predominantly in skeletal muscle and brain and at lower levels in the testis. Found in specific neuronal subpopulations including cortical pyramidal neurons, horn neurons in the spinal cord and Purkinje cells in cerebellum (at protein level).

It localises to the cytoplasm. The protein resides in the perinuclear region. It is found in the cell projection. The protein localises to the ruffle membrane. Its subcellular location is the cytosol. It localises to the membrane. It catalyses the reaction 3',5'-cyclic AMP + H2O = AMP + H(+). The protein operates within purine metabolism; 3',5'-cyclic AMP degradation; AMP from 3',5'-cyclic AMP: step 1/1. Inhibited by rolipram, cilomilast, Ro 20-1724, roflumilast and denbufylline. Its activity is regulated as follows. Inhibited by rolipram. With respect to regulation, inhibited by rolipram and cilomilast. In terms of biological role, hydrolyzes the second messenger 3',5'-cyclic AMP (cAMP), which is a key regulator of many important physiological processes. Functionally, efficiently hydrolyzes cAMP. Efficiently hydrolyzes cAMP. The phosphodiesterase activity is not affected by calcium, calmodulin or cyclic GMP (cGMP) levels. Does not hydrolyze cGMP. The polypeptide is 3',5'-cyclic-AMP phosphodiesterase 4A (PDE4A) (Homo sapiens (Human)).